Consider the following 261-residue polypeptide: Small ribosomal subunit protein uS2 (261 aa).

It belongs to the universal ribosomal protein uS2 family.

This Rhodospirillum centenum (strain ATCC 51521 / SW) protein is Small ribosomal subunit protein uS2.